The sequence spans 159 residues: Ribosomal RNA large subunit methyltransferase H (159 aa).

Gly108 contacts S-adenosyl-L-methionine.

This sequence belongs to the RNA methyltransferase RlmH family. Homodimer.

The protein localises to the cytoplasm. It carries out the reaction pseudouridine(1915) in 23S rRNA + S-adenosyl-L-methionine = N(3)-methylpseudouridine(1915) in 23S rRNA + S-adenosyl-L-homocysteine + H(+). Functionally, specifically methylates the pseudouridine at position 1915 (m3Psi1915) in 23S rRNA. This chain is Ribosomal RNA large subunit methyltransferase H, found in Lactobacillus gasseri (strain ATCC 33323 / DSM 20243 / BCRC 14619 / CIP 102991 / JCM 1131 / KCTC 3163 / NCIMB 11718 / NCTC 13722 / AM63).